The sequence spans 958 residues: Protein translocase subunit SecA (958 aa).

Residues Q87, 105 to 109 (GEGKT), and D524 each bind ATP. Residues 598 to 617 (RRIDNQLRGRSGRQGDPGRS) are disordered. Residues C939, C941, C950, and H951 each contribute to the Zn(2+) site.

This sequence belongs to the SecA family. In terms of assembly, monomer and homodimer. Part of the essential Sec protein translocation apparatus which comprises SecA, SecYEG and auxiliary proteins SecDF-YajC and YidC. It depends on Zn(2+) as a cofactor.

It is found in the cell inner membrane. Its subcellular location is the cytoplasm. The enzyme catalyses ATP + H2O + cellular proteinSide 1 = ADP + phosphate + cellular proteinSide 2.. Its function is as follows. Part of the Sec protein translocase complex. Interacts with the SecYEG preprotein conducting channel. Has a central role in coupling the hydrolysis of ATP to the transfer of proteins into and across the cell membrane, serving both as a receptor for the preprotein-SecB complex and as an ATP-driven molecular motor driving the stepwise translocation of polypeptide chains across the membrane. The polypeptide is Protein translocase subunit SecA (Methylobacterium sp. (strain 4-46)).